The primary structure comprises 27 residues: rRNA/tRNA 2'-O-methyltransferase fibrillarin (27 aa).

Residues 1-12 (XFEGRGGFGGRG) show a composition bias toward gly residues. Positions 1 to 27 (XFEGRGGFGGRGGGDRGGRGXGGFGGG) are disordered. Arginine 5, arginine 11, arginine 16, and arginine 19 each carry asymmetric dimethylarginine.

Belongs to the methyltransferase superfamily. Fibrillarin family. In terms of assembly, component of box C/D small nucleolar ribonucleoprotein (snoRNP) particles. It is associated with the U3, U8 and U13 small nuclear RNAs.

It localises to the nucleus. It is found in the nucleolus. The catalysed reaction is L-glutaminyl-[histone H2A] + S-adenosyl-L-methionine = N(5)-methyl-L-glutaminyl-[histone H2A] + S-adenosyl-L-homocysteine + H(+). In terms of biological role, S-adenosyl-L-methionine-dependent methyltransferase that has the ability to methylate both RNAs and proteins. Involved in pre-rRNA processing. Utilizes the methyl donor S-adenosyl-L-methionine to catalyze the site-specific 2'-hydroxyl methylation of ribose moieties in pre-ribosomal RNA. Site specificity is provided by a guide RNA that base pairs with the substrate. Methylation occurs at a characteristic distance from the sequence involved in base pairing with the guide RNA. Also acts as a protein methyltransferase by mediating methylation of 'Gln-105' of histone H2A (H2AQ105me), a modification that impairs binding of the FACT complex and is specifically present at 35S ribosomal DNA locus. This chain is rRNA/tRNA 2'-O-methyltransferase fibrillarin, found in Physarum polycephalum (Slime mold).